We begin with the raw amino-acid sequence, 550 residues long: Parathyroid hormone 2 receptor (550 aa).

The N-terminal stretch at 1–24 (MAGLGASLHVWGWLMLGSCLLARA) is a signal peptide. Topologically, residues 27-145 (DSDGTITIEE…GKQEFFERLY (119 aa)) are extracellular. Residues Asn-51, Asn-106, Asn-116, and Asn-121 are each glycosylated (N-linked (GlcNAc...) asparagine). The helical transmembrane segment at 146–169 (VMYTVGYSISFGSLAVAILIIGYF) threads the bilayer. Over 170–176 (RRLHCTR) the chain is Cytoplasmic. A helical transmembrane segment spans residues 177–196 (NYIHMHLFVSFMLRATSIFV). At 197–237 (KDRVVHAHIGVKELESLIMQDDPQNSIEATSVDKSQYIGCK) the chain is on the extracellular side. The chain crosses the membrane as a helical span at residues 238–260 (IAVVMFIYFLATNYYWILVEGLY). The Cytoplasmic segment spans residues 261–275 (LHNLIFVAFFSDTKY). Residues 276-297 (LWGFILIGWGFPAAFVAAWAVA) form a helical membrane-spanning segment. Over 298-316 (RATLADARCWELSAGDIKW) the chain is Extracellular. Residues 317–337 (IYQAPILAAIGLNFILFLNTV) form a helical membrane-spanning segment. Topologically, residues 338–364 (RVLATKIWETNAVGHDTRKQYRKLAKS) are cytoplasmic. The chain crosses the membrane as a helical span at residues 365–383 (TLVLVLVFGVHYIVFVCLP). Residues 384–394 (HSFTGLGWEIR) are Extracellular-facing. Residues 395 to 417 (MHCELFFNSFQGFFVSIIYCYCN) form a helical membrane-spanning segment. At 418-550 (GEVQAEVKKM…GCQGETEDVL (133 aa)) the chain is on the cytoplasmic side. Over residues 511 to 531 (EETKEDSGRQGDDILMEKPSR) the composition is skewed to basic and acidic residues. The tract at residues 511–550 (EETKEDSGRQGDDILMEKPSRPMESNPDTEGCQGETEDVL) is disordered.

It belongs to the G-protein coupled receptor 2 family. In terms of assembly, binds to TIPF39/TIP39. As to expression, expressed abundantly in brain and pancreas. Also expressed in the testis.

Its subcellular location is the cell membrane. In terms of biological role, this is a specific receptor for parathyroid hormone. The activity of this receptor is mediated by G proteins which activate adenylyl cyclase. PTH2R may be responsible for PTH effects in a number of physiological systems. It may play a significant role in pancreatic function. PTH2R presence in neurons indicates that it may function as a neurotransmitter receptor. In Homo sapiens (Human), this protein is Parathyroid hormone 2 receptor (PTH2R).